Reading from the N-terminus, the 81-residue chain is Cytotoxin 1c (81 aa).

Residues 1–21 (MKTLLLTLVVVTIVCLDLGYT) form the signal peptide. Intrachain disulfides connect C24/C42, C35/C59, C63/C74, and C75/C80.

The protein belongs to the three-finger toxin family. Short-chain subfamily. Type IA cytotoxin sub-subfamily. Monomer in solution; Homodimer and oligomer in the presence of negatively charged lipids forming a pore with a size ranging between 20 and 30 Angstroms. Expressed by the venom gland.

It is found in the secreted. The protein localises to the target cell membrane. In terms of biological role, shows cytolytic activity on many different cells by forming pore in lipid membranes. In vivo, increases heart rate or kills the animal by cardiac arrest. In addition, it binds to heparin with high affinity, interacts with Kv channel-interacting protein 1 (KCNIP1) in a calcium-independent manner, and binds to integrin alpha-V/beta-3 (ITGAV/ITGB3) with moderate affinity. The chain is Cytotoxin 1c from Naja atra (Chinese cobra).